We begin with the raw amino-acid sequence, 336 residues long: Ketol-acid reductoisomerase (NADP(+)) 1 (336 aa).

Residues 2–181 enclose the KARI N-terminal Rossmann domain; the sequence is AKVYYEKDVT…GATRAGVLET (180 aa). NADP(+)-binding positions include 25–28, arginine 48, serine 52, and 82–85; these read YGSQ and DELQ. Histidine 107 is an active-site residue. Glycine 133 is an NADP(+) binding site. Residues 182–327 form the KARI C-terminal knotted domain; that stretch reads TFKEETETDL…RKLREMMPFV (146 aa). Aspartate 190, glutamate 194, glutamate 226, and glutamate 230 together coordinate Mg(2+). Serine 251 serves as a coordination point for substrate.

This sequence belongs to the ketol-acid reductoisomerase family. It depends on Mg(2+) as a cofactor.

It carries out the reaction (2R)-2,3-dihydroxy-3-methylbutanoate + NADP(+) = (2S)-2-acetolactate + NADPH + H(+). It catalyses the reaction (2R,3R)-2,3-dihydroxy-3-methylpentanoate + NADP(+) = (S)-2-ethyl-2-hydroxy-3-oxobutanoate + NADPH + H(+). Its pathway is amino-acid biosynthesis; L-isoleucine biosynthesis; L-isoleucine from 2-oxobutanoate: step 2/4. It participates in amino-acid biosynthesis; L-valine biosynthesis; L-valine from pyruvate: step 2/4. Involved in the biosynthesis of branched-chain amino acids (BCAA). Catalyzes an alkyl-migration followed by a ketol-acid reduction of (S)-2-acetolactate (S2AL) to yield (R)-2,3-dihydroxy-isovalerate. In the isomerase reaction, S2AL is rearranged via a Mg-dependent methyl migration to produce 3-hydroxy-3-methyl-2-ketobutyrate (HMKB). In the reductase reaction, this 2-ketoacid undergoes a metal-dependent reduction by NADPH to yield (R)-2,3-dihydroxy-isovalerate. The protein is Ketol-acid reductoisomerase (NADP(+)) 1 of Bacillus cereus (strain ATCC 10987 / NRS 248).